Reading from the N-terminus, the 535-residue chain is EGF domain-specific O-linked N-acetylglucosamine transferase (535 aa).

The N-terminal stretch at methionine 1–alanine 16 is a signal peptide. Residues asparagine 22 and asparagine 271 are each glycosylated (N-linked (GlcNAc...) asparagine). The Required for optimal activity motif lies at aspartate 303–aspartate 305. Residues asparagine 362 and asparagine 501 are each glycosylated (N-linked (GlcNAc...) asparagine).

Belongs to the glycosyltransferase 61 family.

The protein resides in the endoplasmic reticulum lumen. The catalysed reaction is L-seryl-[protein] + UDP-N-acetyl-alpha-D-glucosamine = 3-O-(N-acetyl-beta-D-glucosaminyl)-L-seryl-[protein] + UDP + H(+). It carries out the reaction L-threonyl-[protein] + UDP-N-acetyl-alpha-D-glucosamine = 3-O-(N-acetyl-beta-D-glucosaminyl)-L-threonyl-[protein] + UDP + H(+). Catalyzes the transfer of a single N-acetylglucosamine from UDP-GlcNAc to a serine or threonine residue in extracellular proteins resulting in their modification with a beta-linked N-acetylglucosamine (O-GlcNAc). Specifically glycosylates the Thr residue located between the fifth and sixth conserved cysteines of folded EGF-like domains. This is EGF domain-specific O-linked N-acetylglucosamine transferase (EOGT) from Gallus gallus (Chicken).